Here is a 542-residue protein sequence, read N- to C-terminus: Phosphoacetylglucosamine mutase 2 (542 aa).

The Phosphoserine intermediate role is filled by S77. S77 contributes to the Mg(2+) binding site. A phosphoserine mark is found at S77 and S82. Mg(2+)-binding residues include D292, D294, and D296. Substrate-binding positions include E385–N387, R510–T514, and R519.

This sequence belongs to the phosphohexose mutase family. The cofactor is Mg(2+).

It localises to the cytoplasm. It is found in the nucleus. The enzyme catalyses N-acetyl-alpha-D-glucosamine 1-phosphate = N-acetyl-D-glucosamine 6-phosphate. It participates in nucleotide-sugar biosynthesis; UDP-N-acetyl-alpha-D-glucosamine biosynthesis; N-acetyl-alpha-D-glucosamine 1-phosphate from alpha-D-glucosamine 6-phosphate (route I): step 2/2. Functionally, catalyzes the conversion of GlcNAc-6-P into GlcNAc-1-P during the synthesis of uridine diphosphate/UDP-GlcNAc, which is a biosynthetic precursor of chitin and also supplies the amino sugars for N-linked oligosaccharides of glycoproteins. The chain is Phosphoacetylglucosamine mutase 2 from Schizosaccharomyces pombe (strain 972 / ATCC 24843) (Fission yeast).